The primary structure comprises 122 residues: Autophagy-related protein 8a (122 aa).

The segment at 1-21 (MAKSSFKISNPLEARMSESSR) is disordered. G117 carries Phosphatidylethanolamine amidated glycine lipidation. A propeptide spans 118–122 (SLTVA) (removed in mature form).

The protein belongs to the ATG8 family. In terms of assembly, interacts with ATG4B. Interacts with NBR1. In terms of processing, the C-terminal 5 residues are removed by ATG4 to expose Gly-117 at the C-terminus. This Gly-117 forms then a thioester bond with the 'Cys-558' of ATG7 (E1-like activating enzyme) before being transferred to the 'Cys-258' of ATG3 (the specific E2 conjugating enzyme), in order to be finally amidated with phosphatidylethanolamine. This lipid modification anchors ATG8 to autophagosomes. Constitutively expressed.

Its subcellular location is the cytoplasmic vesicle. The protein localises to the autophagosome membrane. It is found in the vacuole membrane. The protein resides in the cytoplasm. It localises to the cytoskeleton. In terms of biological role, ubiquitin-like modifier involved in autophagosomes formation. May mediate the delivery of the autophagosomes to the vacuole via the microtubule cytoskeleton. The sequence is that of Autophagy-related protein 8a (ATG8A) from Arabidopsis thaliana (Mouse-ear cress).